Consider the following 804-residue polypeptide: G-type lectin S-receptor-like serine/threonine-protein kinase At1g61500 (804 aa).

Positions 1 to 24 (MMTRFACLHLFTMFLFTLLSGSSS) are cleaved as a signal peptide. The region spanning 25–145 (AVITTESPLS…VSERALWQSF (121 aa)) is the Bulb-type lectin domain. At 25 to 427 (AVITTESPLS…ELDGNKRKKT (403 aa)) the chain is on the extracellular side. Residues asparagine 54, asparagine 135, and asparagine 237 are each glycosylated (N-linked (GlcNAc...) asparagine). The EGF-like; atypical domain maps to 279–315 (PKKLCDFYGACGPFGLCVMSPSPMCKCFRGFVPKSVE). 2 disulfide bridges follow: cysteine 283/cysteine 295 and cysteine 289/cysteine 303. 3 N-linked (GlcNAc...) asparagine glycosylation sites follow: asparagine 321, asparagine 337, and asparagine 376. One can recognise a PAN domain in the interval 334-416 (CLGNSTGEDA…GELLSIRLAR (83 aa)). Intrachain disulfides connect cysteine 369–cysteine 390 and cysteine 373–cysteine 379. The chain crosses the membrane as a helical span at residues 428 to 448 (IVASIVSLTLFMILGFTAFGV). The Cytoplasmic portion of the chain corresponds to 449-804 (WRCRVEHIAH…GMTQSVILGR (356 aa)). One can recognise a Protein kinase domain in the interval 491–776 (FSLSNKLGQG…DLPSPKQPTF (286 aa)). ATP contacts are provided by residues 497 to 505 (LGQGGFGSV) and lysine 519. Phosphoserine is present on residues serine 525 and serine 540. The interval 580–597 (RKRLEIDWPKRFDIIQGI) is caM-binding. Residue aspartate 616 is the Proton acceptor of the active site. A phosphoserine mark is found at serine 620 and serine 633. Residue threonine 650 is modified to Phosphothreonine. Residues serine 693 and serine 787 each carry the phosphoserine modification.

It belongs to the protein kinase superfamily. Ser/Thr protein kinase family.

It is found in the cell membrane. The enzyme catalyses L-seryl-[protein] + ATP = O-phospho-L-seryl-[protein] + ADP + H(+). It carries out the reaction L-threonyl-[protein] + ATP = O-phospho-L-threonyl-[protein] + ADP + H(+). The polypeptide is G-type lectin S-receptor-like serine/threonine-protein kinase At1g61500 (Arabidopsis thaliana (Mouse-ear cress)).